Reading from the N-terminus, the 132-residue chain is MSEFRLARLGEQIREEISALICSGKIKDPRVSSLLSINRVIVSGDLAYAKVYVSSFLDEHKTKQGVRGLENASGFIRTSLAKKLHVRQCPELTFIFDKSIKEGIDMVNKLESLEYFTDPDEDEGTAGSSEAD.

Belongs to the RbfA family. Monomer. Binds 30S ribosomal subunits, but not 50S ribosomal subunits or 70S ribosomes.

The protein localises to the cytoplasm. Its function is as follows. One of several proteins that assist in the late maturation steps of the functional core of the 30S ribosomal subunit. Associates with free 30S ribosomal subunits (but not with 30S subunits that are part of 70S ribosomes or polysomes). Required for efficient processing of 16S rRNA. May interact with the 5'-terminal helix region of 16S rRNA. The protein is Ribosome-binding factor A of Treponema denticola (strain ATCC 35405 / DSM 14222 / CIP 103919 / JCM 8153 / KCTC 15104).